The sequence spans 189 residues: Protein seele (189 aa).

The N-terminal stretch at 1 to 17 is a signal peptide; that stretch reads MLTKALILFGLLALAQG. Residues 23 to 176 form the Saposin B-type domain; sequence REVKCHVCKA…EQASYCDESP (154 aa). 3 cysteine pairs are disulfide-bonded: Cys27-Cys172, Cys30-Cys165, and Cys85-Cys136. Positions 186–189 match the Prevents secretion from ER motif; that stretch reads KEEL.

The protein belongs to the canopy family.

The protein localises to the endoplasmic reticulum. Its function is as follows. Involved in embryonic dorsal-ventral patterning which is generated by a series of serine protease processing events where gd processes snk which cleaves ea which then processes spz into the activating ligand for the Toll receptor. Required during this process for the secretion of ea from the developing embryo into the perivitelline space and for ea processing. This is Protein seele from Drosophila melanogaster (Fruit fly).